The chain runs to 338 residues: tRNA (cytosine(34)-C(5))-methyltransferase, mitochondrial (338 aa).

Residues 140 to 146, Glu163, Asp194, and Asp212 each bind S-adenosyl-L-methionine; that span reads CAAPGGK. Cys266 (nucleophile) is an active-site residue.

This sequence belongs to the class I-like SAM-binding methyltransferase superfamily. RsmB/NOP family.

Its subcellular location is the mitochondrion matrix. It catalyses the reaction cytidine(34) in mitochondrial tRNA + S-adenosyl-L-methionine = 5-methylcytidine(34) in mitochondrial tRNA + S-adenosyl-L-homocysteine + H(+). In terms of biological role, mitochondrial tRNA methyltransferase that mediates methylation of cytosine to 5-methylcytosine (m5C) at position 34 of mt-tRNA(Met). mt-tRNA(Met) methylation at cytosine(34) takes place at the wobble position of the anticodon and initiates the formation of 5-formylcytosine (f(5)c) at this position. mt-tRNA(Met) containing the f(5)c modification at the wobble position enables recognition of the AUA codon in addition to the AUG codon, expanding codon recognition in mitochondrial translation. This is tRNA (cytosine(34)-C(5))-methyltransferase, mitochondrial from Bos taurus (Bovine).